A 93-amino-acid polypeptide reads, in one-letter code: uncharacterized protein (93 aa).

It belongs to the BolA/IbaG family.

This is an uncharacterized protein from Sinorhizobium sp.